A 279-amino-acid polypeptide reads, in one-letter code: Movement protein (279 aa).

Over residues 256–266 (PPIAIGSPSAS) the composition is skewed to low complexity. The segment at 256-279 (PPIAIGSPSASRNNSFRSQVVNGL) is disordered. Over residues 267–279 (RNNSFRSQVVNGL) the composition is skewed to polar residues.

This sequence belongs to the cucumovirus movement protein family.

The protein localises to the host cell junction. It localises to the host plasmodesma. Transports viral genome to neighboring plant cells directly through plasmosdesmata, without any budding. The movement protein allows efficient cell to cell propagation, by bypassing the host cell wall barrier. Acts by forming a tubular structure at the host plasmodesmata, enlarging it enough to allow free passage of virion capsids. The sequence is that of Movement protein from Cucumis sativus (Cucumber).